Here is an 83-residue protein sequence, read N- to C-terminus: Small ribosomal subunit protein uS17 (83 aa).

This sequence belongs to the universal ribosomal protein uS17 family. As to quaternary structure, part of the 30S ribosomal subunit.

Its function is as follows. One of the primary rRNA binding proteins, it binds specifically to the 5'-end of 16S ribosomal RNA. The sequence is that of Small ribosomal subunit protein uS17 from Zymomonas mobilis subsp. mobilis (strain ATCC 31821 / ZM4 / CP4).